The primary structure comprises 252 residues: Chitooligosaccharide deacetylase (252 aa).

Mg(2+)-binding residues include His61 and His125.

The protein belongs to the YdjC deacetylase family. ChbG subfamily. Homodimer. Requires Mg(2+) as cofactor.

The protein localises to the cytoplasm. The catalysed reaction is N,N'-diacetylchitobiose + H2O = N-acetyl-beta-D-glucosaminyl-(1-&gt;4)-D-glucosamine + acetate. It catalyses the reaction diacetylchitobiose-6'-phosphate + H2O = N'-monoacetylchitobiose-6'-phosphate + acetate. It participates in glycan degradation; chitin degradation. Involved in the degradation of chitin. ChbG is essential for growth on the acetylated chitooligosaccharides chitobiose and chitotriose but is dispensable for growth on cellobiose and chitosan dimer, the deacetylated form of chitobiose. Deacetylation of chitobiose-6-P and chitotriose-6-P is necessary for both the activation of the chb promoter by the regulatory protein ChbR and the hydrolysis of phosphorylated beta-glucosides by the phospho-beta-glucosidase ChbF. Catalyzes the removal of only one acetyl group from chitobiose-6-P to yield monoacetylchitobiose-6-P, the inducer of ChbR and the substrate of ChbF. In Salmonella typhi, this protein is Chitooligosaccharide deacetylase.